We begin with the raw amino-acid sequence, 382 residues long: S-adenosylmethionine synthase (382 aa).

His-16 contacts ATP. Residue Asp-18 participates in Mg(2+) binding. Residue Glu-44 coordinates K(+). 2 residues coordinate L-methionine: Glu-57 and Gln-100. The tract at residues 100 to 110 is flexible loop; that stretch reads QSPDIAQGVDN. Residues 165–167, 231–232, Asp-240, 246–247, and Lys-267 each bind ATP; these read DAK, RF, and RK. Residue Asp-240 coordinates L-methionine. Position 271 (Lys-271) interacts with L-methionine.

This sequence belongs to the AdoMet synthase family. In terms of assembly, homotetramer; dimer of dimers. Requires Mg(2+) as cofactor. It depends on K(+) as a cofactor.

It is found in the cytoplasm. The catalysed reaction is L-methionine + ATP + H2O = S-adenosyl-L-methionine + phosphate + diphosphate. Its pathway is amino-acid biosynthesis; S-adenosyl-L-methionine biosynthesis; S-adenosyl-L-methionine from L-methionine: step 1/1. Its function is as follows. Catalyzes the formation of S-adenosylmethionine (AdoMet) from methionine and ATP. The overall synthetic reaction is composed of two sequential steps, AdoMet formation and the subsequent tripolyphosphate hydrolysis which occurs prior to release of AdoMet from the enzyme. This chain is S-adenosylmethionine synthase, found in Legionella pneumophila subsp. pneumophila (strain Philadelphia 1 / ATCC 33152 / DSM 7513).